The chain runs to 237 residues: Purine nucleoside phosphorylase DeoD-type (237 aa).

His-4 contacts a purine D-ribonucleoside. Phosphate is bound by residues Gly-20, Arg-24, Arg-43, and 87-90 (RVGT). Residues 179–181 (EME) and 203–204 (SD) each bind a purine D-ribonucleoside. Asp-204 (proton donor) is an active-site residue.

Belongs to the PNP/UDP phosphorylase family. As to quaternary structure, homohexamer; trimer of homodimers.

The catalysed reaction is a purine D-ribonucleoside + phosphate = a purine nucleobase + alpha-D-ribose 1-phosphate. The enzyme catalyses a purine 2'-deoxy-D-ribonucleoside + phosphate = a purine nucleobase + 2-deoxy-alpha-D-ribose 1-phosphate. Catalyzes the reversible phosphorolytic breakdown of the N-glycosidic bond in the beta-(deoxy)ribonucleoside molecules, with the formation of the corresponding free purine bases and pentose-1-phosphate. This Streptococcus pyogenes serotype M5 (strain Manfredo) protein is Purine nucleoside phosphorylase DeoD-type.